Here is a 309-residue protein sequence, read N- to C-terminus: Aspartate carbamoyltransferase catalytic subunit (309 aa).

2 residues coordinate carbamoyl phosphate: R57 and T58. K86 provides a ligand contact to L-aspartate. R107, H135, and Q138 together coordinate carbamoyl phosphate. L-aspartate contacts are provided by R168 and R229. Residues L269 and P270 each coordinate carbamoyl phosphate.

This sequence belongs to the aspartate/ornithine carbamoyltransferase superfamily. ATCase family. Heterooligomer of catalytic and regulatory chains.

The catalysed reaction is carbamoyl phosphate + L-aspartate = N-carbamoyl-L-aspartate + phosphate + H(+). It participates in pyrimidine metabolism; UMP biosynthesis via de novo pathway; (S)-dihydroorotate from bicarbonate: step 2/3. Functionally, catalyzes the condensation of carbamoyl phosphate and aspartate to form carbamoyl aspartate and inorganic phosphate, the committed step in the de novo pyrimidine nucleotide biosynthesis pathway. In Methanopyrus kandleri (strain AV19 / DSM 6324 / JCM 9639 / NBRC 100938), this protein is Aspartate carbamoyltransferase catalytic subunit.